The chain runs to 116 residues: S-adenosylmethionine decarboxylase proenzyme (116 aa).

The Schiff-base intermediate with substrate; via pyruvic acid role is filled by serine 63. Serine 63 carries the pyruvic acid (Ser); by autocatalysis modification. The active-site Proton acceptor; for processing activity is histidine 68. Cysteine 83 acts as the Proton donor; for catalytic activity in catalysis.

It belongs to the prokaryotic AdoMetDC family. Type 1 subfamily. As to quaternary structure, heterotetramer of two alpha and two beta chains arranged as a dimer of alpha/beta heterodimers. It depends on pyruvate as a cofactor. In terms of processing, is synthesized initially as an inactive proenzyme. Formation of the active enzyme involves a self-maturation process in which the active site pyruvoyl group is generated from an internal serine residue via an autocatalytic post-translational modification. Two non-identical subunits are generated from the proenzyme in this reaction, and the pyruvate is formed at the N-terminus of the alpha chain, which is derived from the carboxyl end of the proenzyme. The post-translation cleavage follows an unusual pathway, termed non-hydrolytic serinolysis, in which the side chain hydroxyl group of the serine supplies its oxygen atom to form the C-terminus of the beta chain, while the remainder of the serine residue undergoes an oxidative deamination to produce ammonia and the pyruvoyl group blocking the N-terminus of the alpha chain.

It catalyses the reaction S-adenosyl-L-methionine + H(+) = S-adenosyl 3-(methylsulfanyl)propylamine + CO2. It participates in amine and polyamine biosynthesis; S-adenosylmethioninamine biosynthesis; S-adenosylmethioninamine from S-adenosyl-L-methionine: step 1/1. Its function is as follows. Catalyzes the decarboxylation of S-adenosylmethionine to S-adenosylmethioninamine (dcAdoMet), the propylamine donor required for the synthesis of the polyamines spermine and spermidine from the diamine putrescine. The chain is S-adenosylmethionine decarboxylase proenzyme from Clostridium botulinum (strain ATCC 19397 / Type A).